We begin with the raw amino-acid sequence, 272 residues long: UPF0759 protein YecE (272 aa).

The protein belongs to the UPF0759 family.

This chain is UPF0759 protein YecE (yecE), found in Escherichia coli (strain K12).